The following is a 313-amino-acid chain: Carbamate kinase 2 (313 aa).

This sequence belongs to the carbamate kinase family.

It localises to the cytoplasm. It catalyses the reaction hydrogencarbonate + NH4(+) + ATP = carbamoyl phosphate + ADP + H2O + H(+). It functions in the pathway metabolic intermediate metabolism; carbamoyl phosphate degradation; CO(2) and NH(3) from carbamoyl phosphate: step 1/1. The protein is Carbamate kinase 2 (arcC2) of Staphylococcus aureus (strain USA300).